The sequence spans 54 residues: Large ribosomal subunit protein bL33 (54 aa).

The protein belongs to the bacterial ribosomal protein bL33 family.

This Caldicellulosiruptor saccharolyticus (strain ATCC 43494 / DSM 8903 / Tp8T 6331) protein is Large ribosomal subunit protein bL33.